We begin with the raw amino-acid sequence, 612 residues long: Zinc metalloproteinase-disintegrin-like 8 (612 aa).

The signal sequence occupies residues 1–20 (MIQVLLVTICLAVFPYQGSS). Residues 21–189 (IILGSGNVND…KKASQLNLTP (169 aa)) constitute a propeptide that is removed on maturation. The Peptidase M12B domain maps to 199-395 (KYIELVIVAD…NRPPCILNKP (197 aa)). A Ca(2+)-binding site is contributed by Glu202. N-linked (GlcNAc...) asparagine glycosylation occurs at Asn218. Asp286 is a binding site for Ca(2+). Intrachain disulfides connect Cys310-Cys390, Cys350-Cys374, and Cys352-Cys357. Residue His335 coordinates Zn(2+). Residue Glu336 is part of the active site. Zn(2+) is bound by residues His339 and His345. Ca(2+)-binding residues include Cys390, Asn393, Val405, Asn408, Phe410, Glu412, Glu415, and Asp418. One can recognise a Disintegrin domain in the interval 403–489 (PPVCGNYFVE…DCPTDDFQRN (87 aa)). Intrachain disulfides connect Cys406–Cys435, Cys417–Cys430, Cys419–Cys425, Cys429–Cys452, Cys443–Cys449, Cys448–Cys474, Cys461–Cys481, Cys468–Cys500, Cys493–Cys505, Cys512–Cys562, Cys527–Cys573, Cys540–Cys550, Cys557–Cys599, and Cys593–Cys605. A D/ECD-tripeptide motif is present at residues 467–469 (ECD). Asn502 is a glycosylation site (N-linked (GlcNAc...) asparagine).

It belongs to the venom metalloproteinase (M12B) family. P-III subfamily. Requires Zn(2+) as cofactor. Expressed by the venom gland.

It is found in the secreted. Snake venom metalloproteinase that impairs hemostasis in the envenomed animal. In Crotalus adamanteus (Eastern diamondback rattlesnake), this protein is Zinc metalloproteinase-disintegrin-like 8.